The following is an 805-amino-acid chain: Leucine--tRNA ligase (805 aa).

The 'HIGH' region motif lies at 40–51 (PYPSGSGLHVGH). The short motif at 576–580 (KMSKS) is the 'KMSKS' region element. Lysine 579 contributes to the ATP binding site.

It belongs to the class-I aminoacyl-tRNA synthetase family.

It is found in the cytoplasm. It carries out the reaction tRNA(Leu) + L-leucine + ATP = L-leucyl-tRNA(Leu) + AMP + diphosphate. This chain is Leucine--tRNA ligase, found in Chlorobium chlorochromatii (strain CaD3).